Consider the following 407-residue polypeptide: MDNVLPVDSDLFPNTSTNTSESNQFVQPTWQIVLWAAAYTVIVVTSVVGNVVVIWIILAHKRMRTVTNYFLVNLAFAEACMAAFNTVVNFTYAVHNVWYYGLFYCKFHNFFPIAALFASIYSMTAVAFDRYMAIIHPLQPRLSATATKVVIFVIWVLALLLAFPQGYYSTTETMPSRVVCMIEWPEHPNRTYEKAYHICVTVLIYFLPLLVIGYAYTVVGITLWASEIPGDSSDRYHEQVSAKRKVVKMMIVVVCTFAICWLPFHIFFLLPYINPDLYLKKFIQQVYLASMWLAMSSTMYNPIIYCCLNDRFRLGFKHAFRCCPFISAGDYEGLEMKSTRYLQTQSSVYKVSRLETTISTVVGAHEDEPEEGPKATPSSLDLTSNGSSRSNSKTMTESSSFYSNMLA.

A disordered region spans residues 1–20; the sequence is MDNVLPVDSDLFPNTSTNTS. The Extracellular segment spans residues 1-31; the sequence is MDNVLPVDSDLFPNTSTNTSESNQFVQPTWQ. N-linked (GlcNAc...) asparagine glycosylation is found at Asn14 and Asn18. The chain crosses the membrane as a helical span at residues 32-54; the sequence is IVLWAAAYTVIVVTSVVGNVVVI. At 55-64 the chain is on the cytoplasmic side; the sequence is WIILAHKRMR. Residues 65–86 traverse the membrane as a helical segment; the sequence is TVTNYFLVNLAFAEACMAAFNT. The Extracellular portion of the chain corresponds to 87–106; that stretch reads VVNFTYAVHNVWYYGLFYCK. Cys105 and Cys180 are joined by a disulfide. Residues 107 to 128 form a helical membrane-spanning segment; it reads FHNFFPIAALFASIYSMTAVAF. The Cytoplasmic portion of the chain corresponds to 129–148; the sequence is DRYMAIIHPLQPRLSATATK. The helical transmembrane segment at 149–169 threads the bilayer; it reads VVIFVIWVLALLLAFPQGYYS. Residues 170–194 are Extracellular-facing; it reads TTETMPSRVVCMIEWPEHPNRTYEK. A helical transmembrane segment spans residues 195-219; the sequence is AYHICVTVLIYFLPLLVIGYAYTVV. Over 220 to 248 the chain is Cytoplasmic; it reads GITLWASEIPGDSSDRYHEQVSAKRKVVK. The chain crosses the membrane as a helical span at residues 249–270; the sequence is MMIVVVCTFAICWLPFHIFFLL. Residues 271 to 283 are Extracellular-facing; sequence PYINPDLYLKKFI. The chain crosses the membrane as a helical span at residues 284-308; that stretch reads QQVYLASMWLAMSSTMYNPIIYCCL. Over 309–407 the chain is Cytoplasmic; sequence NDRFRLGFKH…SSSFYSNMLA (99 aa). Cys322 carries the S-palmitoyl cysteine lipid modification. The disordered stretch occupies residues 362-407; sequence VGAHEDEPEEGPKATPSSLDLTSNGSSRSNSKTMTESSSFYSNMLA. A compositionally biased stretch (polar residues) spans 376–407; the sequence is TPSSLDLTSNGSSRSNSKTMTESSSFYSNMLA.

It belongs to the G-protein coupled receptor 1 family. In terms of assembly, interacts with ARRB1.

Its subcellular location is the cell membrane. Its function is as follows. This is a receptor for the tachykinin neuropeptide substance P. It is probably associated with G proteins that activate a phosphatidylinositol-calcium second messenger system. The rank order of affinity of this receptor to tachykinins is: substance P &gt; substance K &gt; neuromedin K. This chain is Substance-P receptor (Tacr1), found in Mus musculus (Mouse).